Consider the following 235-residue polypeptide: Large ribosomal subunit protein uL1 (235 aa).

It belongs to the universal ribosomal protein uL1 family. As to quaternary structure, part of the 50S ribosomal subunit.

Its function is as follows. Binds directly to 23S rRNA. The L1 stalk is quite mobile in the ribosome, and is involved in E site tRNA release. Functionally, protein L1 is also a translational repressor protein, it controls the translation of the L11 operon by binding to its mRNA. In Paenarthrobacter aurescens (strain TC1), this protein is Large ribosomal subunit protein uL1.